A 230-amino-acid chain; its full sequence is Ribose-5-phosphate isomerase A (230 aa).

Substrate contacts are provided by residues 32-35 (TGST), 85-88 (DGAD), and 98-101 (KGGG). The active-site Proton acceptor is the glutamate 107. Lysine 125 lines the substrate pocket.

It belongs to the ribose 5-phosphate isomerase family. As to quaternary structure, homodimer.

The catalysed reaction is aldehydo-D-ribose 5-phosphate = D-ribulose 5-phosphate. It participates in carbohydrate degradation; pentose phosphate pathway; D-ribose 5-phosphate from D-ribulose 5-phosphate (non-oxidative stage): step 1/1. Its function is as follows. Catalyzes the reversible conversion of ribose-5-phosphate to ribulose 5-phosphate. This Burkholderia vietnamiensis (strain G4 / LMG 22486) (Burkholderia cepacia (strain R1808)) protein is Ribose-5-phosphate isomerase A.